Here is a 642-residue protein sequence, read N- to C-terminus: 1,4-alpha-glucan branching enzyme GlgB (642 aa).

The Nucleophile role is filled by aspartate 304. The active-site Proton donor is glutamate 355.

The protein belongs to the glycosyl hydrolase 13 family. GlgB subfamily. Monomer.

It carries out the reaction Transfers a segment of a (1-&gt;4)-alpha-D-glucan chain to a primary hydroxy group in a similar glucan chain.. It functions in the pathway glycan biosynthesis; glycogen biosynthesis. Its function is as follows. Catalyzes the formation of the alpha-1,6-glucosidic linkages in glycogen by scission of a 1,4-alpha-linked oligosaccharide from growing alpha-1,4-glucan chains and the subsequent attachment of the oligosaccharide to the alpha-1,6 position. This is 1,4-alpha-glucan branching enzyme GlgB from Streptococcus pneumoniae serotype 4 (strain ATCC BAA-334 / TIGR4).